The following is a 119-amino-acid chain: Circadian clock oscillator protein KaiB (119 aa).

It belongs to the KaiB family. In terms of assembly, the KaiABC complex composition changes during the circadian cycle to control KaiC phosphorylation. Complexes KaiC(6), KaiA(2-4):KaiC(6), KaiB(6):KaiC(6) and KaiC(6):KaiB(6):KaiA(12) are among the most important forms, many form cooperatively. Undergoes a major conformational rearrangment; in the free state forms homotetramers as a dimer of dimers. When bound to the CI domain of KaiC switches to a monomeric thioredoxin-fold (KaiB(fs)). KaiB(fs) binds CikA, leading it to dephosphorylate phospho-RpaA.

Its function is as follows. Key component of the KaiABC oscillator complex, which constitutes the main circadian regulator in cyanobacteria. Complex composition changes during the circadian cycle to control KaiC phosphorylation. KaiA stimulates KaiC autophosphorylation, while KaiB sequesters KaiA, leading to KaiC autodephosphorylation. Phospho-Ser-431 KaiC accumulation triggers binding of KaiB to form the KaiB(6):KaiC(6) complex, leading to changes in output regulators CikA and SasA. KaiB switches to a thioredoxin-like fold (KaiB(fs)) when bound to KaiC. KaiB(6):KaiC(6) formation exposes a site for KaiA binding that sequesters KaiA from KaiC, making the KaiC(6):KaiB(6):KaiA(12) complex that results in KaiC autodephosphorylation. In terms of biological role, a metamorphic protein which reversibly switches between an inactive tetrameric fold and a rare, thioredoxin-like monomeric fold (KaiB(fs)). KaiB(fs) binds phospho-KaiC, KaiA and CikA. KaiA and CikA compete for binding to KaiB(fs), and KaiB(fs) and SasA compete for binding to KaiC, thus the clock oscillator and output signal pathway are tightly coupled. The chain is Circadian clock oscillator protein KaiB from Synechococcus sp. (strain CC9311).